Reading from the N-terminus, the 84-residue chain is U7-ctenitoxin-Pn1a (84 aa).

The signal sequence occupies residues 1–17; sequence MKLCILLVVLLITVVRA. The propeptide occupies 18-38; it reads EEDILENEAEDISPAIKERSA. Intrachain disulfides connect Cys41-Cys56, Cys48-Cys61, Cys55-Cys78, and Cys63-Cys76.

Expressed by the venom gland.

It is found in the secreted. In terms of biological role, antagonist of L-type calcium channels (Cav1/CACNA1). Causes paralysis in the posterior limbs and gradual decreases in movement and aggression during 24 hours at dose levels of 5 ug per mouse. The polypeptide is U7-ctenitoxin-Pn1a (Phoneutria nigriventer (Brazilian armed spider)).